The sequence spans 89 residues: Protein S100-A8 (89 aa).

EF-hand domains follow at residues 13–48 (IDVY…FVQN) and 46–81 (VQNI…VGVA). Residues H17 and H27 each contribute to the Zn(2+) site. Position 33 (D33) interacts with Ca(2+). C42 is modified (S-nitrosocysteine). Ca(2+) is bound by residues D59, N61, D63, and E70. H83 provides a ligand contact to Zn(2+).

It belongs to the S-100 family. As to quaternary structure, homodimer. Preferentially exists as a heterodimer or heterotetramer with S100A9 known as calprotectin (S100A8/A9). Calprotectin (S100A8/9) interacts with CEACAM3 and tubulin filaments in a calcium-dependent manner. Heterotetrameric calprotectin (S100A8/A9) interacts with ANXA6 and associates with tubulin filaments in activated monocytes. S100A8 and calprotectin (S100A8/9) interact with NCF2/P67PHOX, RAC1 and RAC2. Calprotectin (S100A8/9) interacts with CYBA and CYBB. S100A8 interacts with AGER, ATP2A2 and with the heterodimeric complex formed by TLR4 and LY96. Calprotectin (S100A8/9) interacts with NOS2 to form the iNOS-S100A8/A9 transnitrosylase complex. Calprotectin (S100A8/9) interacts with CD69.

It localises to the secreted. The protein localises to the cytoplasm. The protein resides in the cytoskeleton. It is found in the cell membrane. Calprotectin (S100A8/A9) activity on TLR4 signaling is inhibited by paquinimod. S100A8 is a calcium- and zinc-binding protein which plays a prominent role in the regulation of inflammatory processes and immune response. It can induce neutrophil chemotaxis and adhesion. Predominantly found as calprotectin (S100A8/A9) which has a wide plethora of intra- and extracellular functions. The intracellular functions include: facilitating leukocyte arachidonic acid trafficking and metabolism, modulation of the tubulin-dependent cytoskeleton during migration of phagocytes and activation of the neutrophilic NADPH-oxidase. Also participates in regulatory T-cell differentiation together with CD69. Activates NADPH-oxidase by facilitating the enzyme complex assembly at the cell membrane, transferring arachidonic acid, an essential cofactor, to the enzyme complex and S100A8 contributes to the enzyme assembly by directly binding to NCF2/P67PHOX. The extracellular functions involve pro-inflammatory, antimicrobial, oxidant-scavenging and apoptosis-inducing activities. Its pro-inflammatory activity includes recruitment of leukocytes, promotion of cytokine and chemokine production, and regulation of leukocyte adhesion and migration. Acts as an alarmin or a danger associated molecular pattern (DAMP) molecule and stimulates innate immune cells via binding to pattern recognition receptors such as Toll-like receptor 4 (TLR4) and receptor for advanced glycation endproducts (AGER). Binding to TLR4 and AGER activates the MAP-kinase and NF-kappa-B signaling pathways resulting in the amplification of the pro-inflammatory cascade. Has antimicrobial activity towards bacteria and fungi and exerts its antimicrobial activity probably via chelation of Zn(2+) which is essential for microbial growth. Can induce cell death via autophagy and apoptosis and this occurs through the cross-talk of mitochondria and lysosomes via reactive oxygen species (ROS) and the process involves BNIP3. Can regulate neutrophil number and apoptosis by an anti-apoptotic effect; regulates cell survival via ITGAM/ITGB and TLR4 and a signaling mechanism involving MEK-ERK. Its role as an oxidant scavenger has a protective role in preventing exaggerated tissue damage by scavenging oxidants. The iNOS-S100A8/A9 transnitrosylase complex is proposed to direct selective inflammatory stimulus-dependent S-nitrosylation of multiple targets such as GAPDH, ANXA5, EZR, MSN and VIM by recognizing a [IL]-x-C-x-x-[DE] motif; S100A8 seems to contribute to S-nitrosylation site selectivity. Functionally, (Microbial infection) Upon infection by murine coronavirus (MHV-A59), induces expansion of aberrant immature neutrophils in a TLR4-dependent manner. This Mus musculus (Mouse) protein is Protein S100-A8.